The chain runs to 544 residues: Chaperonin GroEL (544 aa).

ATP is bound by residues Thr-29–Pro-32, Asp-86–Thr-90, Gly-413, Asn-476–Ala-478, and Asp-492.

The protein belongs to the chaperonin (HSP60) family. Forms a cylinder of 14 subunits composed of two heptameric rings stacked back-to-back. Interacts with the co-chaperonin GroES.

It is found in the cytoplasm. The catalysed reaction is ATP + H2O + a folded polypeptide = ADP + phosphate + an unfolded polypeptide.. Its function is as follows. Together with its co-chaperonin GroES, plays an essential role in assisting protein folding. The GroEL-GroES system forms a nano-cage that allows encapsulation of the non-native substrate proteins and provides a physical environment optimized to promote and accelerate protein folding. This chain is Chaperonin GroEL, found in Bacillus licheniformis (strain ATCC 14580 / DSM 13 / JCM 2505 / CCUG 7422 / NBRC 12200 / NCIMB 9375 / NCTC 10341 / NRRL NRS-1264 / Gibson 46).